A 167-amino-acid chain; its full sequence is Peptide deformylase (167 aa).

Fe cation contacts are provided by cysteine 90 and histidine 132. The active site involves glutamate 133. Histidine 136 contacts Fe cation.

The protein belongs to the polypeptide deformylase family. Fe(2+) is required as a cofactor.

It catalyses the reaction N-terminal N-formyl-L-methionyl-[peptide] + H2O = N-terminal L-methionyl-[peptide] + formate. In terms of biological role, removes the formyl group from the N-terminal Met of newly synthesized proteins. Requires at least a dipeptide for an efficient rate of reaction. N-terminal L-methionine is a prerequisite for activity but the enzyme has broad specificity at other positions. The sequence is that of Peptide deformylase from Dehalococcoides mccartyi (strain CBDB1).